We begin with the raw amino-acid sequence, 248 residues long: Acetylglutamate kinase (248 aa).

Residues Gly36–Gly37, Arg58, and Asn147 contribute to the substrate site.

This sequence belongs to the acetylglutamate kinase family. ArgB subfamily.

The protein resides in the cytoplasm. The catalysed reaction is N-acetyl-L-glutamate + ATP = N-acetyl-L-glutamyl 5-phosphate + ADP. It participates in amino-acid biosynthesis; L-arginine biosynthesis; N(2)-acetyl-L-ornithine from L-glutamate: step 2/4. Its function is as follows. Catalyzes the ATP-dependent phosphorylation of N-acetyl-L-glutamate. The protein is Acetylglutamate kinase of Thermus thermophilus (strain ATCC BAA-163 / DSM 7039 / HB27).